Reading from the N-terminus, the 313-residue chain is NAD-capped RNA hydrolase NudC (313 aa).

Arginine 111 contributes to the substrate binding site. A Nudix hydrolase domain is found at 168-293 (PRIDPAVICL…DWSSASESKL (126 aa)). The a divalent metal cation site is built by alanine 202, glutamate 218, and glutamate 222. Positions 203 to 224 (GFVEAGESFEVCVAREIREEIG) match the Nudix box motif. 236–243 (QQWPFPRS) provides a ligand contact to substrate. A divalent metal cation is bound at residue glutamate 264.

The protein belongs to the Nudix hydrolase family. NudC subfamily. As to quaternary structure, homodimer. Requires Mg(2+) as cofactor. It depends on Mn(2+) as a cofactor.

It catalyses the reaction a 5'-end NAD(+)-phospho-ribonucleoside in mRNA + H2O = a 5'-end phospho-adenosine-phospho-ribonucleoside in mRNA + beta-nicotinamide D-ribonucleotide + 2 H(+). It carries out the reaction NAD(+) + H2O = beta-nicotinamide D-ribonucleotide + AMP + 2 H(+). The catalysed reaction is NADH + H2O = reduced beta-nicotinamide D-ribonucleotide + AMP + 2 H(+). Its function is as follows. mRNA decapping enzyme that specifically removes the nicotinamide adenine dinucleotide (NAD) cap from a subset of mRNAs by hydrolyzing the diphosphate linkage to produce nicotinamide mononucleotide (NMN) and 5' monophosphate mRNA. The NAD-cap is present at the 5'-end of some mRNAs and stabilizes RNA against 5'-processing. Has preference for mRNAs with a 5'-end purine. Catalyzes the hydrolysis of a broad range of dinucleotide pyrophosphates. This is NAD-capped RNA hydrolase NudC from Mycobacterium tuberculosis (strain ATCC 25177 / H37Ra).